The following is a 384-amino-acid chain: Dual specificity protein phosphatase 5 (384 aa).

The 123-residue stretch at 19–141 folds into the Rhodanese domain; sequence AEARCVVLDC…FYSQYPECCV (123 aa). The short motif at 53 to 74 is the Nuclear localization signal element; sequence RRARGGAVSARYVLADEAARAR. The Tyrosine-protein phosphatase domain maps to 178–319; it reads GPVEILPFLY…LLQYESEILP (142 aa). C263 functions as the Phosphocysteine intermediate in the catalytic mechanism.

The protein belongs to the protein-tyrosine phosphatase family. Non-receptor class dual specificity subfamily.

The protein resides in the nucleus. The catalysed reaction is O-phospho-L-tyrosyl-[protein] + H2O = L-tyrosyl-[protein] + phosphate. The enzyme catalyses O-phospho-L-seryl-[protein] + H2O = L-seryl-[protein] + phosphate. It catalyses the reaction O-phospho-L-threonyl-[protein] + H2O = L-threonyl-[protein] + phosphate. In terms of biological role, dual specificity protein phosphatase; active with phosphotyrosine, phosphoserine and phosphothreonine residues. The highest relative activity is toward ERK1. This Rattus norvegicus (Rat) protein is Dual specificity protein phosphatase 5 (Dusp5).